The following is a 240-amino-acid chain: Lactate utilization protein C (240 aa).

This sequence belongs to the LutC/YkgG family.

Its function is as follows. Is involved in L-lactate degradation and allows cells to grow with lactate as the sole carbon source. The polypeptide is Lactate utilization protein C (Bacillus pumilus (strain SAFR-032)).